The primary structure comprises 405 residues: Argininosuccinate synthase (405 aa).

ATP is bound by residues 10–18 and alanine 38; that span reads AYSGGVDTS. Tyrosine 89 is an L-citrulline binding site. ATP is bound at residue glycine 119. L-aspartate is bound by residues threonine 121, asparagine 125, and aspartate 126. Asparagine 125 provides a ligand contact to L-citrulline. L-citrulline contacts are provided by arginine 129, serine 177, serine 186, glutamate 262, and tyrosine 274.

It belongs to the argininosuccinate synthase family. Type 1 subfamily. In terms of assembly, homotetramer.

The protein resides in the cytoplasm. It carries out the reaction L-citrulline + L-aspartate + ATP = 2-(N(omega)-L-arginino)succinate + AMP + diphosphate + H(+). Its pathway is amino-acid biosynthesis; L-arginine biosynthesis; L-arginine from L-ornithine and carbamoyl phosphate: step 2/3. This chain is Argininosuccinate synthase, found in Synechococcus sp. (strain RCC307).